The chain runs to 270 residues: Glutamate racemase (270 aa).

Substrate-binding positions include D10 to S11 and Y42 to G43. C73 (proton donor/acceptor) is an active-site residue. N74–T75 lines the substrate pocket. C184 (proton donor/acceptor) is an active-site residue. T185 to H186 provides a ligand contact to substrate.

Belongs to the aspartate/glutamate racemases family.

It catalyses the reaction L-glutamate = D-glutamate. The protein operates within cell wall biogenesis; peptidoglycan biosynthesis. In terms of biological role, provides the (R)-glutamate required for cell wall biosynthesis. This chain is Glutamate racemase, found in Geobacter metallireducens (strain ATCC 53774 / DSM 7210 / GS-15).